A 418-amino-acid chain; its full sequence is Beta-arrestin-1 (418 aa).

The interval 1–163 is interaction with SRC; the sequence is MGDKGTRVFK…LEEKIHKRNS (163 aa). Residues 45–86 form an interaction with CHRM2 region; sequence PEYLKERRVYVTLTCAFRYGREDLDVLGLTFRKDLFVANVQS. At Tyr47 the chain carries Phosphotyrosine. The 1D-myo-inositol hexakisphosphate site is built by Lys250, Met255, Lys324, and Lys326. The tract at residues 318–418 is interaction with TRAF6; the sequence is IVSYKVKVKL…GTGSPHLNNR (101 aa). 2 disordered regions span residues 353–375 and 397–418; these read HPKP…VDTN and KGMK…LNNR. Residues 355–366 show a composition bias toward basic and acidic residues; sequence KPKEEPPHREVP. Ser412 is subject to Phosphoserine.

It belongs to the arrestin family. Monomer. Homodimer. Homooligomer; the self-association is mediated by InsP6-binding. Heterooligomer with ARRB2; the association is mediated by InsP6-binding. Interacts with ADRB2 (phosphorylated). Interacts with CHRM2 (phosphorylated). Interacts with LHCGR. Interacts with CYTH2 and CASR. Interacts with AP2B1 (dephosphorylated); phosphorylation of AP2B1 disrupts the interaction. Interacts (dephosphorylated at Ser-412) with CLTC. Interacts with CCR2 and GRK2. Interacts with CRR5. Interacts with PTAFR (phosphorylated on serine residues). Interacts with CLTC and MAP2K3. Interacts with CREB1. Interacts with TRAF6. Interacts with IGF1R and MDM2. Interacts with C5AR1. Interacts with PDE4D. Interacts with SRC (via the SH3 domain and the protein kinase domain); the interaction is independent of the phosphorylation state of SRC C-terminus. Interacts with TACR1. Interacts with RAF1. Interacts with DVL1; the interaction is enhanced by phosphorylation of DVL1. Interacts with DVL2; the interaction is enhanced by phosphorylation of DVL2. Interacts with IGF1R. Interacts with CHUK, IKBKB and MAP3K14. Associates with MAP kinase p38. Part of a MAPK signaling complex consisting of TACR1, ARRB1, SRC, MAPK1 (activated) and MAPK3 (activated). Part of a MAPK signaling complex consisting of F2RL1, ARRB1, RAF1, MAPK1 (activated) and MAPK3 (activated). Interacts with GPR143. Interacts with MAP2K4/MKK4. Interacts with HCK and CXCR1 (phosphorylated). Interacts with ACKR3 and ACKR4. Interacts with ARRDC1; the interaction is direct. Interacts with GPR61, GPR62 and GPR135. Constitutively phosphorylated at in the cytoplasm. At the plasma membrane, is rapidly dephosphorylated, a process that is required for clathrin binding and ADRB2 endocytosis but not for ADRB2 binding and desensitization. Once internalized, is rephosphorylated. Post-translationally, the ubiquitination status appears to regulate the formation and trafficking of beta-arrestin-GPCR complexes and signaling. Ubiquitination appears to occur GPCR-specific. Ubiquitinated by MDM2; the ubiquitination is required for rapid internalization of ADRB2. Deubiquitinated by USP33; the deubiquitination leads to a dissociation of the beta-arrestin-GPCR complex. Stimulation of a class A GPCR, such as ADRB2, induces transient ubiquitination and subsequently promotes association with USP33.

The protein resides in the cytoplasm. Its subcellular location is the nucleus. It is found in the cell membrane. The protein localises to the membrane. It localises to the clathrin-coated pit. The protein resides in the cell projection. Its subcellular location is the pseudopodium. It is found in the cytoplasmic vesicle. In terms of biological role, functions in regulating agonist-mediated G-protein coupled receptor (GPCR) signaling by mediating both receptor desensitization and resensitization processes. During homologous desensitization, beta-arrestins bind to the GPRK-phosphorylated receptor and sterically preclude its coupling to the cognate G-protein; the binding appears to require additional receptor determinants exposed only in the active receptor conformation. The beta-arrestins target many receptors for internalization by acting as endocytic adapters (CLASPs, clathrin-associated sorting proteins) and recruiting the GPRCs to the adapter protein 2 complex 2 (AP-2) in clathrin-coated pits (CCPs). However, the extent of beta-arrestin involvement appears to vary significantly depending on the receptor, agonist and cell type. Internalized arrestin-receptor complexes traffic to intracellular endosomes, where they remain uncoupled from G-proteins. Two different modes of arrestin-mediated internalization occur. Class A receptors, like ADRB2, OPRM1, ENDRA, D1AR and ADRA1B dissociate from beta-arrestin at or near the plasma membrane and undergo rapid recycling. Class B receptors, like AVPR2, AGTR1, NTSR1, TRHR and TACR1 internalize as a complex with arrestin and traffic with it to endosomal vesicles, presumably as desensitized receptors, for extended periods of time. Receptor resensitization then requires that receptor-bound arrestin is removed so that the receptor can be dephosphorylated and returned to the plasma membrane. Involved in internalization of P2RY4 and UTP-stimulated internalization of P2RY2. Involved in phosphorylation-dependent internalization of OPRD1 ands subsequent recycling. Involved in the degradation of cAMP by recruiting cAMP phosphodiesterases to ligand-activated receptors. Beta-arrestins function as multivalent adapter proteins that can switch the GPCR from a G-protein signaling mode that transmits short-lived signals from the plasma membrane via small molecule second messengers and ion channels to a beta-arrestin signaling mode that transmits a distinct set of signals that are initiated as the receptor internalizes and transits the intracellular compartment. Acts as a signaling scaffold for MAPK pathways such as MAPK1/3 (ERK1/2). ERK1/2 activated by the beta-arrestin scaffold is largely excluded from the nucleus and confined to cytoplasmic locations such as endocytic vesicles, also called beta-arrestin signalosomes. Recruits c-Src/SRC to ADRB2 resulting in ERK activation. GPCRs for which the beta-arrestin-mediated signaling relies on both ARRB1 and ARRB2 (codependent regulation) include ADRB2, F2RL1 and PTH1R. For some GPCRs the beta-arrestin-mediated signaling relies on either ARRB1 or ARRB2 and is inhibited by the other respective beta-arrestin form (reciprocal regulation). Inhibits ERK1/2 signaling in AGTR1- and AVPR2-mediated activation (reciprocal regulation). Is required for SP-stimulated endocytosis of NK1R and recruits c-Src/SRC to internalized NK1R resulting in ERK1/2 activation, which is required for the antiapoptotic effects of SP. Is involved in proteinase-activated F2RL1-mediated ERK activity. Acts as a signaling scaffold for the AKT1 pathway. Is involved in alpha-thrombin-stimulated AKT1 signaling. Is involved in IGF1-stimulated AKT1 signaling leading to increased protection from apoptosis. Involved in activation of the p38 MAPK signaling pathway and in actin bundle formation. Involved in F2RL1-mediated cytoskeletal rearrangement and chemotaxis. Involved in AGTR1-mediated stress fiber formation by acting together with GNAQ to activate RHOA. Appears to function as signaling scaffold involved in regulation of MIP-1-beta-stimulated CCR5-dependent chemotaxis. Involved in attenuation of NF-kappa-B-dependent transcription in response to GPCR or cytokine stimulation by interacting with and stabilizing CHUK. May serve as nuclear messenger for GPCRs. Involved in OPRD1-stimulated transcriptional regulation by translocating to CDKN1B and FOS promoter regions and recruiting EP300 resulting in acetylation of histone H4. Involved in regulation of LEF1 transcriptional activity via interaction with DVL1 and/or DVL2 Also involved in regulation of receptors other than GPCRs. Involved in Toll-like receptor and IL-1 receptor signaling through the interaction with TRAF6 which prevents TRAF6 autoubiquitination and oligomerization required for activation of NF-kappa-B and JUN. Involved in IL8-mediated granule release in neutrophils. Binds phosphoinositides. Binds inositolhexakisphosphate (InsP6). Required for atypical chemokine receptor ACKR2-induced RAC1-LIMK1-PAK1-dependent phosphorylation of cofilin (CFL1) and for the up-regulation of ACKR2 from endosomal compartment to cell membrane, increasing its efficiency in chemokine uptake and degradation. Involved in the internalization of the atypical chemokine receptor ACKR3. Negatively regulates the NOTCH signaling pathway by mediating the ubiquitination and degradation of NOTCH1 by ITCH. Participates in the recruitment of the ubiquitin-protein ligase to the receptor. This chain is Beta-arrestin-1 (Arrb1), found in Mus musculus (Mouse).